Here is a 311-residue protein sequence, read N- to C-terminus: MLVVPARLHRWPPEVQDLFGREGPLVLEIGFGDGRFTAELARSRPDWLVLGAEVSAASVLRALRRMRREGLANVRLYHGQGPFALRNLVLPGTLDQVIVNFPDPWPKKRHQERRLLREAFFRRLSTRLKSGGSLLLTTDHEGYFRFALEEAERTGLYRVEVRPPPEAHLRTKYALKWKEAGRTFFHAAFIKLREDPAPWPPLRRYDVAHALLSGELPQDLALEKTAVRLKEGVAVFLEVARGKEGFYVLTHVEEEDLTQDLLLEVRKSARGVYAGVSRFGSPLITEAVKGAVRALVDRLEAHGLEVVQDHT.

Residues Glu-28, Glu-53, and Asp-103 each coordinate S-adenosyl-L-methionine. The active site involves Asp-103. Substrate contacts are provided by Lys-107 and Asp-139.

The protein belongs to the class I-like SAM-binding methyltransferase superfamily. TrmB family.

It carries out the reaction guanosine(46) in tRNA + S-adenosyl-L-methionine = N(7)-methylguanosine(46) in tRNA + S-adenosyl-L-homocysteine. It functions in the pathway tRNA modification; N(7)-methylguanine-tRNA biosynthesis. Catalyzes the formation of N(7)-methylguanine at position 46 (m7G46) in tRNA. The protein is tRNA (guanine-N(7)-)-methyltransferase of Thermus thermophilus (strain ATCC BAA-163 / DSM 7039 / HB27).